A 415-amino-acid polypeptide reads, in one-letter code: Histidine--tRNA ligase (415 aa).

Belongs to the class-II aminoacyl-tRNA synthetase family. Homodimer.

Its subcellular location is the cytoplasm. The enzyme catalyses tRNA(His) + L-histidine + ATP = L-histidyl-tRNA(His) + AMP + diphosphate + H(+). This Gluconacetobacter diazotrophicus (strain ATCC 49037 / DSM 5601 / CCUG 37298 / CIP 103539 / LMG 7603 / PAl5) protein is Histidine--tRNA ligase.